The sequence spans 373 residues: Chaperone protein DnaJ (373 aa).

A J domain is found at 5–71 (DYYEILGVSR…EKRAMYDKFG (67 aa)). A CR-type zinc finger spans residues 144–226 (GVKIPLEYDR…CGGTGRIRKR (83 aa)). Residues Cys-157, Cys-160, Cys-174, Cys-177, Cys-200, Cys-203, Cys-214, and Cys-217 each contribute to the Zn(2+) site. CXXCXGXG motif repeat units lie at residues 157 to 164 (CEHCHGEG), 174 to 181 (CPKCHGTG), 200 to 207 (CNQCGGTG), and 214 to 221 (CRVCGGTG).

The protein belongs to the DnaJ family. As to quaternary structure, homodimer. Zn(2+) is required as a cofactor.

The protein localises to the cytoplasm. Its function is as follows. Participates actively in the response to hyperosmotic and heat shock by preventing the aggregation of stress-denatured proteins and by disaggregating proteins, also in an autonomous, DnaK-independent fashion. Unfolded proteins bind initially to DnaJ; upon interaction with the DnaJ-bound protein, DnaK hydrolyzes its bound ATP, resulting in the formation of a stable complex. GrpE releases ADP from DnaK; ATP binding to DnaK triggers the release of the substrate protein, thus completing the reaction cycle. Several rounds of ATP-dependent interactions between DnaJ, DnaK and GrpE are required for fully efficient folding. Also involved, together with DnaK and GrpE, in the DNA replication of plasmids through activation of initiation proteins. This Thermosipho melanesiensis (strain DSM 12029 / CIP 104789 / BI429) protein is Chaperone protein DnaJ.